Reading from the N-terminus, the 220-residue chain is 3-keto-L-gulonate-6-phosphate decarboxylase SgbH (220 aa).

Residue aspartate 11 participates in substrate binding. The Mg(2+) site is built by glutamate 33 and aspartate 62. Residue arginine 192 participates in substrate binding.

The protein belongs to the HPS/KGPDC family. KGPDC subfamily. In terms of assembly, homodimer. Mg(2+) serves as cofactor.

It catalyses the reaction 3-dehydro-L-gulonate 6-phosphate + H(+) = L-xylulose 5-phosphate + CO2. Functionally, catalyzes the decarboxylation of 3-keto-L-gulonate-6-P into L-xylulose-5-P. May be involved in the utilization of 2,3-diketo-L-gulonate. This is 3-keto-L-gulonate-6-phosphate decarboxylase SgbH (sgbH) from Escherichia coli (strain K12).